Consider the following 223-residue polypeptide: Translation initiation factor 6 (223 aa).

It belongs to the eIF-6 family.

Functionally, binds to the 50S ribosomal subunit and prevents its association with the 30S ribosomal subunit to form the 70S initiation complex. The polypeptide is Translation initiation factor 6 (Saccharolobus islandicus (strain M.16.27) (Sulfolobus islandicus)).